Here is a 281-residue protein sequence, read N- to C-terminus: Type VI secretion system accessory component TagJ (281 aa).

As to quaternary structure, interacts with TssB1 (via N-terminus). Interacts with ClpV1.

Its function is as follows. Component of the H1 type VI (H1-T6SS) secretion system that plays a role in the release of toxins targeting both eukaryotic and prokaryotic species. Forms a stable complex with TssB1. This complex, although not crucial for the H1-T6SS function, may fine-tune the assembly of the system. Plays a role in the interaction between ClpV1 and the TssC1/TssB1 sheath. The chain is Type VI secretion system accessory component TagJ from Pseudomonas aeruginosa (strain ATCC 15692 / DSM 22644 / CIP 104116 / JCM 14847 / LMG 12228 / 1C / PRS 101 / PAO1).